We begin with the raw amino-acid sequence, 226 residues long: 7-carboxy-7-deazaguanine synthase (226 aa).

Substrate is bound by residues 10–12 (LQG) and R25. Positions 16 to 221 (YTGIPCIFVR…LQTHKFIWTP (206 aa)) constitute a Radical SAM core domain. The [4Fe-4S] cluster site is built by C29, C33, and C36. S38 provides a ligand contact to Mg(2+). Residue T69 participates in substrate binding. Residue G71 participates in S-adenosyl-L-methionine binding.

It belongs to the radical SAM superfamily. 7-carboxy-7-deazaguanine synthase family. Homodimer. The cofactor is [4Fe-4S] cluster. S-adenosyl-L-methionine serves as cofactor. It depends on Mg(2+) as a cofactor.

The catalysed reaction is 6-carboxy-5,6,7,8-tetrahydropterin + H(+) = 7-carboxy-7-deazaguanine + NH4(+). Its pathway is purine metabolism; 7-cyano-7-deazaguanine biosynthesis. Functionally, catalyzes the complex heterocyclic radical-mediated conversion of 6-carboxy-5,6,7,8-tetrahydropterin (CPH4) to 7-carboxy-7-deazaguanine (CDG), a step common to the biosynthetic pathways of all 7-deazapurine-containing compounds. The protein is 7-carboxy-7-deazaguanine synthase of Koribacter versatilis (strain Ellin345).